Consider the following 304-residue polypeptide: Acetylxylan esterase A (304 aa).

Positions 1-24 are cleaved as a signal peptide; sequence MLLSTHLLFVITTLVTSLLHPIDG. Catalysis depends on serine 148, which acts as the Charge relay system. A glycan (N-linked (GlcNAc...) asparagine) is linked at asparagine 190.

Belongs to the carbohydrate esterase 1 (CE1) family. AxeA subfamily. As to quaternary structure, monomer.

The protein resides in the secreted. The enzyme catalyses Deacetylation of xylans and xylo-oligosaccharides.. Its pathway is glycan degradation; xylan degradation. Inactivated by di-isopropylfluorophosphate and phenylmethylsulfonylfluorid (PMSF), a specific inhibitor of serine esterases. Acetylxylan esterase involved in the hydrolysis of xylan, a major structural heterogeneous polysaccharide found in plant biomass representing the second most abundant polysaccharide in the biosphere, after cellulose. Degrades acetylated xylans by cleaving acetyl side groups from the hetero-xylan backbone. The sequence is that of Acetylxylan esterase A (axeA) from Aspergillus awamori (Black koji mold).